Consider the following 478-residue polypeptide: Cytochrome c-552 (478 aa).

A signal peptide spans 1–26 (MTRIKINARRIFSLLIPFFFFTSVHA). A heme c-binding site is contributed by histidine 94. Residues cysteine 122, cysteine 125, and lysine 126 each coordinate heme. Cysteine 160, cysteine 163, histidine 164, cysteine 209, cysteine 212, and histidine 213 together coordinate heme c. Ca(2+) is bound by residues glutamate 215, tyrosine 216, lysine 261, and glutamine 263. Tyrosine 216 is a binding site for substrate. Histidine 264 lines the substrate pocket. Histidine 275, cysteine 282, cysteine 285, histidine 286, histidine 301, cysteine 314, cysteine 317, histidine 318, and histidine 393 together coordinate heme c.

The protein belongs to the cytochrome c-552 family. The cofactor is Ca(2+). It depends on heme c as a cofactor.

Its subcellular location is the periplasm. It carries out the reaction 6 Fe(III)-[cytochrome c] + NH4(+) + 2 H2O = 6 Fe(II)-[cytochrome c] + nitrite + 8 H(+). The protein operates within nitrogen metabolism; nitrate reduction (assimilation). Functionally, catalyzes the reduction of nitrite to ammonia, consuming six electrons in the process. The polypeptide is Cytochrome c-552 (Escherichia coli O9:H4 (strain HS)).